Here is a 547-residue protein sequence, read N- to C-terminus: Chaperonin GroEL (547 aa).

ATP is bound by residues 30 to 33 (TLGP), Lys51, 87 to 91 (DGTTT), Gly415, 479 to 481 (NAA), and Asp495.

The protein belongs to the chaperonin (HSP60) family. As to quaternary structure, forms a cylinder of 14 subunits composed of two heptameric rings stacked back-to-back. Interacts with the co-chaperonin GroES.

Its subcellular location is the cytoplasm. The catalysed reaction is ATP + H2O + a folded polypeptide = ADP + phosphate + an unfolded polypeptide.. Functionally, together with its co-chaperonin GroES, plays an essential role in assisting protein folding. The GroEL-GroES system forms a nano-cage that allows encapsulation of the non-native substrate proteins and provides a physical environment optimized to promote and accelerate protein folding. This is Chaperonin GroEL from Enterobacter sp. (strain 638).